A 243-amino-acid polypeptide reads, in one-letter code: Exosome complex component Rrp41 (243 aa).

Belongs to the RNase PH family. Rrp41 subfamily. As to quaternary structure, component of the archaeal exosome complex. Forms a hexameric ring-like arrangement composed of 3 Rrp41-Rrp42 heterodimers. The hexameric ring associates with a trimer of Rrp4 and/or Csl4 subunits.

It localises to the cytoplasm. In terms of biological role, catalytic component of the exosome, which is a complex involved in RNA degradation. Has 3'-&gt;5' exoribonuclease activity. Can also synthesize heteromeric RNA-tails. This chain is Exosome complex component Rrp41, found in Sulfurisphaera tokodaii (strain DSM 16993 / JCM 10545 / NBRC 100140 / 7) (Sulfolobus tokodaii).